Here is a 147-residue protein sequence, read N- to C-terminus: Transmembrane protein 210 (147 aa).

The first 31 residues, 1–31 (MAPGPWPVSCLRGGPLGLTYLSLLLIPAAAG), serve as a signal peptide directing secretion. Residues 32-47 (TYCECSLGLSREALIA) are Extracellular-facing. Residues 48–68 (LLVVLAGISASCFCALVIVAI) traverse the membrane as a helical segment. The Cytoplasmic portion of the chain corresponds to 69–147 (GVLRAKGETC…PPPPPPLPPE (79 aa)). Residues 128-147 (AIPMEASSEEPPPPPPLPPE) form a disordered region. The segment covering 137-147 (EPPPPPPLPPE) has biased composition (pro residues).

The protein localises to the membrane. Its subcellular location is the cytoplasmic vesicle. The protein resides in the secretory vesicle. It localises to the acrosome. The polypeptide is Transmembrane protein 210 (TMEM210) (Homo sapiens (Human)).